A 232-amino-acid chain; its full sequence is Protein FAM246B (232 aa).

Residues 19–31 (EVLRRVTGRRRDP) show a composition bias toward basic and acidic residues. Disordered stretches follow at residues 19–47 (EVLR…RAPG), 80–101 (AAGA…VCGE), 151–179 (ALLP…GPTL), and 191–232 (AASR…GGGD). Residues 211-220 (APARKNHKKM) show a composition bias toward basic residues.

It belongs to the FAM246 family.

This Homo sapiens (Human) protein is Protein FAM246B.